We begin with the raw amino-acid sequence, 463 residues long: GTPase Der (463 aa).

Positions 1-20 (MDEGDEDLISGRGFTEGARK) are disordered. EngA-type G domains lie at 27-190 (GVLA…KQAE) and 202-375 (RRVA…ESWD). GTP is bound by residues 33–40 (GRPNVGKS), 80–84 (DTGGW), 142–145 (NKID), 208–215 (GRPNVGKS), 255–259 (DTAGI), and 320–323 (NKWD). The region spanning 376-458 (QRIPTGKLNA…PIQISVNIRE (83 aa)) is the KH-like domain.

Belongs to the TRAFAC class TrmE-Era-EngA-EngB-Septin-like GTPase superfamily. EngA (Der) GTPase family. In terms of assembly, associates with the 50S ribosomal subunit.

Functionally, GTPase that plays an essential role in the late steps of ribosome biogenesis. The protein is GTPase Der of Bifidobacterium longum (strain NCC 2705).